A 229-amino-acid polypeptide reads, in one-letter code: Transmembrane protein 182 (229 aa).

Positions 1–26 (MRLNIAIFFGALFGALGVLLFLVAFG) are cleaved as a signal peptide. The Extracellular portion of the chain corresponds to 27–114 (SDYWLLATEV…SYDSAVIYRG (88 aa)). An N-linked (GlcNAc...) asparagine glycan is attached at Asn-47. Residues 49–59 (TFHHEGFFWRC) are interaction with ITGB1. A glycan (N-linked (GlcNAc...) asparagine) is linked at Asn-102. Residues 115–135 (FWAVLMLLGVVAVVIASFLII) form a helical membrane-spanning segment. Residues 136–153 (CAAPFASHFLYKAGGGSY) lie on the Cytoplasmic side of the membrane. Residues 154–174 (IAAGILFSLVVMLYVIWVQAV) form a helical membrane-spanning segment. Residues 175-200 (ADMESYRNMKMKDCLDFTPSVLYGWS) are Extracellular-facing. Residues 201-221 (FFLAPAGIFFSLLAGLLFLVV) form a helical membrane-spanning segment. At 222–229 (GWHIQIHH) the chain is on the cytoplasmic side.

It belongs to the TMEM182 family. Interacts with ITGB1.

It localises to the cell membrane. In terms of biological role, negatively regulates myogenesis and skeletal muscle regeneration via its association with ITGB1. Modulates ITGB1 activation by decreasing ITGB1-LAMB1 interaction and inhibiting ITGB1-mediated intracellular signaling during myogenesis. In Homo sapiens (Human), this protein is Transmembrane protein 182 (TMEM182).